A 972-amino-acid chain; its full sequence is Isoleucine--tRNA ligase (972 aa).

The 'HIGH' region signature appears at 63 to 73; that stretch reads PYANGNIHIGH. E603 lines the L-isoleucyl-5'-AMP pocket. The 'KMSKS' region motif lies at 644–648; that stretch reads KMSKS. K647 is a binding site for ATP.

Belongs to the class-I aminoacyl-tRNA synthetase family. IleS type 1 subfamily. Monomer.

It is found in the cytoplasm. It catalyses the reaction tRNA(Ile) + L-isoleucine + ATP = L-isoleucyl-tRNA(Ile) + AMP + diphosphate. In terms of biological role, catalyzes the attachment of isoleucine to tRNA(Ile). As IleRS can inadvertently accommodate and process structurally similar amino acids such as valine, to avoid such errors it has two additional distinct tRNA(Ile)-dependent editing activities. One activity is designated as 'pretransfer' editing and involves the hydrolysis of activated Val-AMP. The other activity is designated 'posttransfer' editing and involves deacylation of mischarged Val-tRNA(Ile). This is Isoleucine--tRNA ligase from Brucella abortus (strain 2308).